We begin with the raw amino-acid sequence, 594 residues long: Probable translation initiation factor IF-2 (594 aa).

The region spanning 11 to 226 (LRTPIVCVMG…LIGLAQRFLE (216 aa)) is the tr-type G domain. The segment at 20-27 (GHVDHGKT) is G1. GTP is bound at residue 20–27 (GHVDHGKT). Positions 45-49 (AITQH) are G2. Residues 81-84 (DTPG) form a G3 region. Residues 81–85 (DTPGH) and 135–138 (NKID) contribute to the GTP site. Residues 135–138 (NKID) form a G4 region. Residues 203–205 (SAR) form a G5 region.

This sequence belongs to the TRAFAC class translation factor GTPase superfamily. Classic translation factor GTPase family. IF-2 subfamily.

In terms of biological role, function in general translation initiation by promoting the binding of the formylmethionine-tRNA to ribosomes. Seems to function along with eIF-2. In Methanocella arvoryzae (strain DSM 22066 / NBRC 105507 / MRE50), this protein is Probable translation initiation factor IF-2.